A 699-amino-acid chain; its full sequence is D-(-)-3-hydroxybutyrate oligomer hydrolase (699 aa).

An N-terminal signal peptide occupies residues 1–19 (MNPSLCIAVAFACPLSALA). Ser-303 acts as the Charge relay system in catalysis.

This sequence belongs to the D-(-)-3-hydroxybutyrate oligomer hydrolase family.

It localises to the secreted. It carries out the reaction (3R)-hydroxybutanoate dimer + H2O = 2 (R)-3-hydroxybutanoate + H(+). The protein operates within lipid metabolism; butanoate metabolism. Its function is as follows. Participates in the degradation of poly-3-hydroxybutyrate (PHB). It works downstream of poly(3-hydroxybutyrate) depolymerase, hydrolyzing D(-)-3-hydroxybutyrate oligomers of various length (3HB-oligomers) into 3HB-monomers. This Azoarcus sp. (strain BH72) protein is D-(-)-3-hydroxybutyrate oligomer hydrolase.